The sequence spans 1150 residues: DNA polymerase (1150 aa).

Residues 1-53 (MSLVQGHGTSGLFTEPPNPINQQESSGPSLPAQDAAQAFASSPRAGATSTIVN) are disordered.

This sequence belongs to the DNA polymerase type-B family. In terms of assembly, heterodimer with the terminal protein; this heterodimer binds to bp 9 to 18 of the genome. Forms a complex with viral pTP, DBP and hosts NFIA and POU2F1/OCT1 for initiation of replication.

Its subcellular location is the host nucleus. The enzyme catalyses DNA(n) + a 2'-deoxyribonucleoside 5'-triphosphate = DNA(n+1) + diphosphate. Its function is as follows. Eukaryotic-type DNA polymerase involved in viral genomic replication. DNA synthesis is protein primed, and acts in a strand displacement replication. Assembles in complex with viral pTP, DBP, host NFIA and host POU2F1/OCT1 on viral origin of replication. The polymerase covalently transfers dCMP onto pTP, thereby initiating complementary strand synthesis. This is DNA polymerase from Canis lupus familiaris (Dog).